A 927-amino-acid chain; its full sequence is Calmodulin-binding transcription activator CBT (927 aa).

Residues 26–152 (YEKLVAEAAA…YRQTAEENAM (127 aa)) constitute a DNA-binding region (CG-1). Residues 70 to 96 (LYDRKVVRNFRKDGHNWKKKKDGRTVQ) form a necessary and sufficient for nuclear localization region. Positions 72 to 79 (DRKVVRNF) match the Nuclear localization signal motif. The ANK repeat unit spans residues 609 to 638 (SGWTALHWAAYHGRERMVATLLSAGANPSL). 2 consecutive IQ domains span residues 757 to 786 (EIVA…IQSH) and 799 to 828 (MRRQ…SVGI). Residues 826–845 (VGIVEKAILRWRKKRKGLRG) form a calmodulin-binding region. Residues 830–851 (EKAILRWRKKRKGLRGIASGMP) form a necessary and sufficient for nuclear localization region. The 30-residue stretch at 882–911 (FNRSVVRVQALFRSYKAQQEYRRMKIAHEE) folds into the IQ 3 domain.

This sequence belongs to the CAMTA family.

Its subcellular location is the nucleus. Transcriptional activation activity is strongly reduced by calmodulin. Transcription activator that binds calmodulin in a calcium-dependent manner in vitro. Binds to the DNA consensus sequence 5'-T[AC]CG[CT]GT[GT][GT][GT][GT]T[GT]CG-3'. The sequence is that of Calmodulin-binding transcription activator CBT from Oryza sativa subsp. japonica (Rice).